The chain runs to 216 residues: ADP-sugar pyrophosphatase (216 aa).

An N-acetylmethionine modification is found at M1. Phosphoserine occurs at positions 3 and 10. W28 contributes to the substrate binding site. K42 participates in a covalent cross-link: Glycyl lysine isopeptide (Lys-Gly) (interchain with G-Cter in SUMO2). T45 carries the post-translational modification Phosphothreonine. Substrate is bound by residues 46 to 47 (WE) and R51. The region spanning 57–194 (QTADGVAVIP…EEHLTVDARV (138 aa)) is the Nudix hydrolase domain. Y74 bears the Phosphotyrosine mark. A substrate-binding site is contributed by R84. A96 contacts Mg(2+). A Nudix box motif is present at residues 97-118 (GLIDDGETPEAAALRELEEETG). L98 contacts substrate. 2 residues coordinate Mg(2+): E112 and E116. D133 is a substrate binding site. E163 lines the Mg(2+) pocket. N6-acetyllysine occurs at positions 207 and 215.

Belongs to the Nudix hydrolase family. As to quaternary structure, homodimer. Interacts with PARG. The cofactor is Mg(2+). Post-translationally, phosphorylation at Thr-45 is required for homodimer stability; dephosphorylation results in destabilization of the homodimer. Dephosphorylation at Thr-45 promotes the ATP-synthesis activity.

It is found in the nucleus. The enzyme catalyses D-ribose 5-phosphate + ATP + H(+) = ADP-D-ribose + diphosphate. It catalyses the reaction ADP-D-ribose + H2O = D-ribose 5-phosphate + AMP + 2 H(+). The catalysed reaction is 8-oxo-dGDP + H2O = 8-oxo-dGMP + phosphate + H(+). In terms of biological role, enzyme that can either act as an ADP-sugar pyrophosphatase in absence of diphosphate or catalyze the synthesis of ATP in presence of diphosphate. In absence of diphosphate, hydrolyzes with similar activities various modified nucleoside diphosphates such as ADP-ribose, ADP-mannose, ADP-glucose, 8-oxo-GDP and 8-oxo-dGDP. Can also hydrolyze other nucleotide sugars with low activity. In presence of diphosphate, mediates the synthesis of ATP in the nucleus by catalyzing the conversion of ADP-ribose to ATP and ribose 5-phosphate. Nuclear ATP synthesis takes place when dephosphorylated at Thr-45. Nuclear ATP generation is required for extensive chromatin remodeling events that are energy-consuming. Does not play a role in U8 snoRNA decapping activity. Binds U8 snoRNA. This Pongo abelii (Sumatran orangutan) protein is ADP-sugar pyrophosphatase.